The primary structure comprises 409 residues: Phospho-N-acetylmuramoyl-pentapeptide-transferase (409 aa).

Transmembrane regions (helical) follow at residues 23–43 (YITFRSALAIIMSLLISTIFG), 73–93 (TPTMGGLIIIFSTLLPVLLLA), 95–115 (LNNIYIILLIVTTIWMGAIGF), 132–152 (GIFKVIGQVGLGLIVGTTLYF), 214–234 (YAWLIFIPIVIFIITAVSNGA), 247–267 (TSAISVIAIGVFTFVSGNVIF), 279–299 (SGEMTVFIAAFVGALIGFLWY), 305–325 (AVFMGDTGSLTIGGIIAVLAI), 331–351 (MLIPVFCGIFLAENLSVVLQV), and 386–406 (KIVTRFWIVGILLAIVSIVTL).

The protein belongs to the glycosyltransferase 4 family. MraY subfamily. Mg(2+) serves as cofactor.

The protein resides in the cell inner membrane. It carries out the reaction UDP-N-acetyl-alpha-D-muramoyl-L-alanyl-gamma-D-glutamyl-meso-2,6-diaminopimeloyl-D-alanyl-D-alanine + di-trans,octa-cis-undecaprenyl phosphate = di-trans,octa-cis-undecaprenyl diphospho-N-acetyl-alpha-D-muramoyl-L-alanyl-D-glutamyl-meso-2,6-diaminopimeloyl-D-alanyl-D-alanine + UMP. Its pathway is cell wall biogenesis; peptidoglycan biosynthesis. Functionally, catalyzes the initial step of the lipid cycle reactions in the biosynthesis of the cell wall peptidoglycan: transfers peptidoglycan precursor phospho-MurNAc-pentapeptide from UDP-MurNAc-pentapeptide onto the lipid carrier undecaprenyl phosphate, yielding undecaprenyl-pyrophosphoryl-MurNAc-pentapeptide, known as lipid I. This Flavobacterium psychrophilum (strain ATCC 49511 / DSM 21280 / CIP 103535 / JIP02/86) protein is Phospho-N-acetylmuramoyl-pentapeptide-transferase.